The sequence spans 345 residues: Hydroxymethylglutaryl-CoA synthase (345 aa).

Asp28 contacts (3S)-3-hydroxy-3-methylglutaryl-CoA. The active-site Proton donor/acceptor is the Glu80. The (3S)-3-hydroxy-3-methylglutaryl-CoA site is built by Cys112 and Thr153. Catalysis depends on Cys112, which acts as the Acyl-thioester intermediate. Arg199 contributes to the CoA binding site. 2 residues coordinate (3S)-3-hydroxy-3-methylglutaryl-CoA: Thr201 and His234. Residue His234 is the Proton donor/acceptor of the active site. Residue Lys239 participates in CoA binding. Residues Arg243, Asn266, and Ser296 each contribute to the (3S)-3-hydroxy-3-methylglutaryl-CoA site.

It belongs to the thiolase-like superfamily. Archaeal HMG-CoA synthase family. Interacts with acetoacetyl-CoA thiolase that catalyzes the precedent step in the pathway and with a DUF35 protein. The acetoacetyl-CoA thiolase/HMG-CoA synthase complex channels the intermediate via a fused CoA-binding site, which allows for efficient coupling of the endergonic thiolase reaction with the exergonic HMGCS reaction.

It catalyses the reaction acetoacetyl-CoA + acetyl-CoA + H2O = (3S)-3-hydroxy-3-methylglutaryl-CoA + CoA + H(+). It functions in the pathway metabolic intermediate biosynthesis; (R)-mevalonate biosynthesis; (R)-mevalonate from acetyl-CoA: step 2/3. Functionally, catalyzes the condensation of acetyl-CoA with acetoacetyl-CoA to form 3-hydroxy-3-methylglutaryl-CoA (HMG-CoA). Functions in the mevalonate (MVA) pathway leading to isopentenyl diphosphate (IPP), a key precursor for the biosynthesis of isoprenoid compounds that are building blocks of archaeal membrane lipids. In Methanocaldococcus jannaschii (strain ATCC 43067 / DSM 2661 / JAL-1 / JCM 10045 / NBRC 100440) (Methanococcus jannaschii), this protein is Hydroxymethylglutaryl-CoA synthase.